Here is a 248-residue protein sequence, read N- to C-terminus: UPF0736 protein BCE33L1074 (248 aa).

It belongs to the UPF0736 family.

The chain is UPF0736 protein BCE33L1074 from Bacillus cereus (strain ZK / E33L).